Consider the following 594-residue polypeptide: Apolipoprotein N-acyltransferase (594 aa).

Residues 1 to 29 (MIPAVTDDDPLEDPLDDDVAPGLDDAEPE) show a composition bias toward acidic residues. Positions 1 to 48 (MIPAVTDDDPLEDPLDDDVAPGLDDAEPEPEPRDEHDEPSRPATGSRI) are disordered. Residues 1–67 (MIPAVTDDDP…RFGKGVLDRC (67 aa)) are Cytoplasmic-facing. Over residues 30–40 (PEPRDEHDEPS) the composition is skewed to basic and acidic residues. The chain crosses the membrane as a helical span at residues 68–87 (APLSAAIGGGLALWLSFPPI). Residues 88 to 116 (GWWFTAFPGLALLGWVLTRTATTKAGGFG) lie on the Extracellular side of the membrane. The chain crosses the membrane as a helical span at residues 117–134 (YGVLFGLAFYVPLLPWIS). At 135–138 (GLVG) the chain is on the cytoplasmic side. A helical membrane pass occupies residues 139–160 (AVPWLALAFAESLFCGLFGLGA). The Extracellular portion of the chain corresponds to 161–221 (VVVVRLPGWP…IGGAPLVSFA (61 aa)). Residues 222–239 (VALIGFSLTLLTAQIVWW) form a helical membrane-spanning segment. Residues 240 to 251 (WRHGHKPGVPAP) are Cytoplasmic-facing. The helical transmembrane segment at 252–269 (AVMLPGVAIAASLLVTAL) threads the bilayer. The Extracellular portion of the chain corresponds to 270–554 (VWPQVRQSGT…TDLTPATKWG (285 aa)). A CN hydrolase domain is found at 287-543 (VTVAAVQGNV…PAYLDNQIRL (257 aa)). Glu-340 acts as the Proton acceptor in catalysis. Lys-405 is an active-site residue. The active-site Nucleophile is the Cys-455. A helical transmembrane segment spans residues 555–572 (PIVQAVLVIAGVAVLLIA). Residues 573 to 594 (ILHNGRFAPRMLRRRSATTVKR) lie on the Cytoplasmic side of the membrane.

Belongs to the CN hydrolase family. Apolipoprotein N-acyltransferase subfamily. In terms of assembly, interacts with Ppm1 (AC A0QZ12) upon coexpression in E.coli, which increases the PPM synthase activity of Ppm1.

It is found in the cell membrane. The catalysed reaction is N-terminal S-1,2-diacyl-sn-glyceryl-L-cysteinyl-[lipoprotein] + a glycerophospholipid = N-acyl-S-1,2-diacyl-sn-glyceryl-L-cysteinyl-[lipoprotein] + a 2-acyl-sn-glycero-3-phospholipid + H(+). Its pathway is protein modification; lipoprotein biosynthesis (N-acyl transfer). Functionally, catalyzes the phospholipid dependent N-acylation of the N-terminal cysteine of apolipoprotein, the last step in lipoprotein maturation. Can transfer a number of fatty acids (C16 and C19, palmitic and probably tuberculostearic acids respectively are shown). Enhances the polyprenol monophosphomannose (PPM) synthase activity of Ppm1 (AC A0QZ12) without itself having PPM synthase catalytic activity. The sequence is that of Apolipoprotein N-acyltransferase from Mycolicibacterium smegmatis (strain ATCC 700084 / mc(2)155) (Mycobacterium smegmatis).